Here is a 336-residue protein sequence, read N- to C-terminus: tRNA(Ile)-lysidine synthase (336 aa).

32–37 (SGGQDS) serves as a coordination point for ATP.

This sequence belongs to the tRNA(Ile)-lysidine synthase family.

Its subcellular location is the cytoplasm. It catalyses the reaction cytidine(34) in tRNA(Ile2) + L-lysine + ATP = lysidine(34) in tRNA(Ile2) + AMP + diphosphate + H(+). Its function is as follows. Ligates lysine onto the cytidine present at position 34 of the AUA codon-specific tRNA(Ile) that contains the anticodon CAU, in an ATP-dependent manner. Cytidine is converted to lysidine, thus changing the amino acid specificity of the tRNA from methionine to isoleucine. The chain is tRNA(Ile)-lysidine synthase from Synechococcus sp. (strain JA-3-3Ab) (Cyanobacteria bacterium Yellowstone A-Prime).